The chain runs to 65 residues: uncharacterized protein (65 aa).

The protein localises to the plastid. The protein resides in the chloroplast. This is an uncharacterized protein from Porphyra purpurea (Red seaweed).